A 559-amino-acid polypeptide reads, in one-letter code: Dihydroxy-acid dehydratase (559 aa).

Aspartate 81 serves as a coordination point for Mg(2+). Residue cysteine 122 coordinates [2Fe-2S] cluster. Positions 123 and 124 each coordinate Mg(2+). Position 124 is an N6-carboxylysine (lysine 124). Cysteine 195 is a [2Fe-2S] cluster binding site. Glutamate 448 contributes to the Mg(2+) binding site. The active-site Proton acceptor is the serine 474.

This sequence belongs to the IlvD/Edd family. In terms of assembly, homodimer. [2Fe-2S] cluster serves as cofactor. Mg(2+) is required as a cofactor.

The catalysed reaction is (2R)-2,3-dihydroxy-3-methylbutanoate = 3-methyl-2-oxobutanoate + H2O. It catalyses the reaction (2R,3R)-2,3-dihydroxy-3-methylpentanoate = (S)-3-methyl-2-oxopentanoate + H2O. The protein operates within amino-acid biosynthesis; L-isoleucine biosynthesis; L-isoleucine from 2-oxobutanoate: step 3/4. It participates in amino-acid biosynthesis; L-valine biosynthesis; L-valine from pyruvate: step 3/4. In terms of biological role, functions in the biosynthesis of branched-chain amino acids. Catalyzes the dehydration of (2R,3R)-2,3-dihydroxy-3-methylpentanoate (2,3-dihydroxy-3-methylvalerate) into 2-oxo-3-methylpentanoate (2-oxo-3-methylvalerate) and of (2R)-2,3-dihydroxy-3-methylbutanoate (2,3-dihydroxyisovalerate) into 2-oxo-3-methylbutanoate (2-oxoisovalerate), the penultimate precursor to L-isoleucine and L-valine, respectively. The chain is Dihydroxy-acid dehydratase from Geobacillus kaustophilus (strain HTA426).